We begin with the raw amino-acid sequence, 429 residues long: Adenylosuccinate synthetase (429 aa).

Residues Gly12 to Lys18 and Gly40 to Thr42 contribute to the GTP site. Catalysis depends on Asp13, which acts as the Proton acceptor. Residues Asp13 and Gly40 each coordinate Mg(2+). Residues Asp13–Lys16, Asn38–His41, Thr129, Arg143, Gln223, Thr238, and Arg302 contribute to the IMP site. The active-site Proton donor is the His41. Substrate is bound at residue Thr298–Arg304. Residues Arg304, Lys330–Asp332, and Ser412–Ser414 each bind GTP.

The protein belongs to the adenylosuccinate synthetase family. In terms of assembly, homodimer. Mg(2+) is required as a cofactor.

The protein resides in the cytoplasm. It carries out the reaction IMP + L-aspartate + GTP = N(6)-(1,2-dicarboxyethyl)-AMP + GDP + phosphate + 2 H(+). The protein operates within purine metabolism; AMP biosynthesis via de novo pathway; AMP from IMP: step 1/2. Its function is as follows. Plays an important role in the de novo pathway of purine nucleotide biosynthesis. Catalyzes the first committed step in the biosynthesis of AMP from IMP. This is Adenylosuccinate synthetase from Gluconobacter oxydans (strain 621H) (Gluconobacter suboxydans).